A 251-amino-acid chain; its full sequence is tRNA (guanine-N(7)-)-methyltransferase (251 aa).

Positions 80, 105, 132, and 155 each coordinate S-adenosyl-L-methionine. The active site involves Asp155. Residues Lys159, Asp191, and 228 to 231 (TKFE) contribute to the substrate site.

Belongs to the class I-like SAM-binding methyltransferase superfamily. TrmB family.

The catalysed reaction is guanosine(46) in tRNA + S-adenosyl-L-methionine = N(7)-methylguanosine(46) in tRNA + S-adenosyl-L-homocysteine. Its pathway is tRNA modification; N(7)-methylguanine-tRNA biosynthesis. Functionally, catalyzes the formation of N(7)-methylguanine at position 46 (m7G46) in tRNA. The chain is tRNA (guanine-N(7)-)-methyltransferase from Histophilus somni (strain 129Pt) (Haemophilus somnus).